Consider the following 353-residue polypeptide: Mitochondrial distribution and morphology protein 12 (353 aa).

An SMP-LTD domain is found at 1–330 (MSFDIKWENL…WPSWICLDMN (330 aa)). Acidic residues-rich tracts occupy residues 64–75 (DEFYEDTTDSPE), 84–103 (TGDDDDDDDDDEDDESDDDG), and 330–342 (NDDDEEEEEEENP). Disordered stretches follow at residues 64 to 140 (DEFY…NRSR) and 330 to 353 (NDDDEEEEEEENPSESSSTTHVGS).

Belongs to the MDM12 family. Component of the ER-mitochondria encounter structure (ERMES) or MDM complex, composed of MMM1, MDM10, MDM12 and MDM34. An MMM1 homodimer associates with one molecule of MDM12 on each side in a pairwise head-to-tail manner, and the SMP-LTD domains of MMM1 and MDM12 generate a continuous hydrophobic tunnel for phospholipid trafficking.

Its subcellular location is the mitochondrion outer membrane. The protein localises to the endoplasmic reticulum membrane. In terms of biological role, component of the ERMES/MDM complex, which serves as a molecular tether to connect the endoplasmic reticulum (ER) and mitochondria. Components of this complex are involved in the control of mitochondrial shape and protein biogenesis, and function in nonvesicular lipid trafficking between the ER and mitochondria. MDM12 is required for the interaction of the ER-resident membrane protein MMM1 and the outer mitochondrial membrane-resident beta-barrel protein MDM10. The MDM12-MMM1 subcomplex functions in the major beta-barrel assembly pathway that is responsible for biogenesis of all mitochondrial outer membrane beta-barrel proteins, and acts in a late step after the SAM complex. The MDM10-MDM12-MMM1 subcomplex further acts in the TOM40-specific pathway after the action of the MDM12-MMM1 complex. Essential for establishing and maintaining the structure of mitochondria and maintenance of mtDNA nucleoids. The polypeptide is Mitochondrial distribution and morphology protein 12 (Candida tropicalis (strain ATCC MYA-3404 / T1) (Yeast)).